The primary structure comprises 554 residues: Phosphomethylpyrimidine synthase (554 aa).

Substrate is bound by residues asparagine 188, methionine 217, tyrosine 246, histidine 282, 302 to 304 (SRG), 343 to 346 (DGLR), and glutamate 382. Zn(2+) is bound at residue histidine 386. Tyrosine 409 contributes to the substrate binding site. Position 450 (histidine 450) interacts with Zn(2+). [4Fe-4S] cluster is bound by residues cysteine 530, cysteine 533, and cysteine 538.

Belongs to the ThiC family. In terms of assembly, homodimer. [4Fe-4S] cluster is required as a cofactor.

It carries out the reaction 5-amino-1-(5-phospho-beta-D-ribosyl)imidazole + S-adenosyl-L-methionine = 4-amino-2-methyl-5-(phosphooxymethyl)pyrimidine + CO + 5'-deoxyadenosine + formate + L-methionine + 3 H(+). It participates in cofactor biosynthesis; thiamine diphosphate biosynthesis. Its function is as follows. Catalyzes the synthesis of the hydroxymethylpyrimidine phosphate (HMP-P) moiety of thiamine from aminoimidazole ribotide (AIR) in a radical S-adenosyl-L-methionine (SAM)-dependent reaction. This Coxiella burnetii (strain CbuK_Q154) (Coxiella burnetii (strain Q154)) protein is Phosphomethylpyrimidine synthase.